The primary structure comprises 156 residues: Large ribosomal subunit protein uL30 (156 aa).

It belongs to the universal ribosomal protein uL30 family. In terms of assembly, part of the 50S ribosomal subunit.

The sequence is that of Large ribosomal subunit protein uL30 from Sulfolobus acidocaldarius (strain ATCC 33909 / DSM 639 / JCM 8929 / NBRC 15157 / NCIMB 11770).